The chain runs to 517 residues: Crotonobetaine/carnitine--CoA ligase (517 aa).

This sequence belongs to the ATP-dependent AMP-binding enzyme family.

The enzyme catalyses 4-(trimethylamino)butanoate + ATP + CoA = 4-(trimethylamino)butanoyl-CoA + AMP + diphosphate. It catalyses the reaction crotonobetaine + ATP + CoA = crotonobetainyl-CoA + AMP + diphosphate. It carries out the reaction (R)-carnitine + ATP + CoA = (R)-carnitinyl-CoA + AMP + diphosphate. Its pathway is amine and polyamine metabolism; carnitine metabolism. Functionally, catalyzes the transfer of CoA to carnitine, generating the initial carnitinyl-CoA needed for the CaiB reaction cycle. Also has activity toward crotonobetaine and gamma-butyrobetaine. In Escherichia coli O45:K1 (strain S88 / ExPEC), this protein is Crotonobetaine/carnitine--CoA ligase.